The chain runs to 474 residues: Neuronal acetylcholine receptor subunit eat-2 (474 aa).

Positions methionine 1–serine 21 are cleaved as a signal peptide. Over serine 22 to tyrosine 237 the chain is Extracellular. A glycan (N-linked (GlcNAc...) asparagine) is linked at asparagine 95. Cysteine 149 and cysteine 163 are oxidised to a cystine. 3 helical membrane passes run glycine 238–methionine 258, isoleucine 266–valine 286, and leucine 303–phenylalanine 323. Topologically, residues arginine 324–arginine 440 are cytoplasmic. Positions proline 359–leucine 378 are disordered. Residues leucine 441–cysteine 461 form a helical membrane-spanning segment.

Belongs to the ligand-gated ion channel (TC 1.A.9) family. Acetylcholine receptor (TC 1.A.9.1) subfamily. As to quaternary structure, neuronal AChR seems to be composed of two different type of subunits: alpha and beta. Expressed in pharyngeal muscle.

Its subcellular location is the postsynaptic cell membrane. It is found in the cell membrane. Its function is as follows. After binding acetylcholine, the AChR responds by an extensive change in conformation that affects all subunits and leads to opening of an ion-conducting channel across the plasma membrane. Nicotinic acetylcholine receptor in the MC pharyngeal motor neuron involved in pharyngeal pumping. Has a role in the determination of life span possibly via calorific restriction which affects growth rate, although this is independent of metabolic activity. Plays a role in the defense against the accumulation of ingested live pathogenic bacteria in the intestine. The protein is Neuronal acetylcholine receptor subunit eat-2 of Caenorhabditis elegans.